The following is a 130-amino-acid chain: Large ribosomal subunit protein bL12 (130 aa).

It belongs to the bacterial ribosomal protein bL12 family. As to quaternary structure, homodimer. Part of the ribosomal stalk of the 50S ribosomal subunit. Forms a multimeric L10(L12)X complex, where L10 forms an elongated spine to which 2 to 4 L12 dimers bind in a sequential fashion. Binds GTP-bound translation factors.

Its function is as follows. Forms part of the ribosomal stalk which helps the ribosome interact with GTP-bound translation factors. Is thus essential for accurate translation. This Parafrankia sp. (strain EAN1pec) protein is Large ribosomal subunit protein bL12.